Reading from the N-terminus, the 402-residue chain is uncharacterized protein (402 aa).

The Cytoplasmic segment spans residues 1–11 (MTPSNYQRTRW). A helical membrane pass occupies residues 12–34 (LTLIGTIITQFALGSVYTWSLFN). Topologically, residues 35 to 43 (GALSAKLDA) are periplasmic. A helical transmembrane segment spans residues 44 to 66 (PVSQVAFSFGLLSLGLAISSSVA). Topologically, residues 67–72 (GKLQER) are cytoplasmic. A helical transmembrane segment spans residues 73–95 (FGVKRVTMASGILLGLGFFLTAH). The Periplasmic segment spans residues 96–99 (SDNL). The chain crosses the membrane as a helical span at residues 100-122 (MMLWLSAGVLVGLADGAGYLLTL). At 123–134 (SNCVKWFPERKG) the chain is on the cytoplasmic side. The helical transmembrane segment at 135–154 (LISAFAIGSYGLGSLGFKFI) threads the bilayer. Residues 155–168 (DTQLLETVGLEKTF) lie on the Periplasmic side of the membrane. The chain crosses the membrane as a helical span at residues 169 to 186 (VIWGAIALLMIVFGATLM). At 187-216 (KDAPKQEVKTSNGVVEKDYTLAESMRKPQY) the chain is on the cytoplasmic side. The helical transmembrane segment at 217–236 (WMLAVMFLTACMSGLYVIGV) threads the bilayer. The Periplasmic segment spans residues 237–250 (AKDIAQSLAHLDVV). The helical transmembrane segment at 251–273 (SAANAVTVISIANLSGRLVLGIL) threads the bilayer. Residues 274–279 (SDKIAR) lie on the Cytoplasmic side of the membrane. Residues 280–302 (IRVITIGQVISLVGMAALLFAPL) traverse the membrane as a helical segment. Residues 303–306 (NAVT) are Periplasmic-facing. Residues 307–329 (FFAAIACVAFNFGGTITVFPSLV) form a helical membrane-spanning segment. Topologically, residues 330 to 341 (SEFFGLNNLAKN) are cytoplasmic. Residues 342–364 (YGVIYLGFGIGSICGSIIASLFG) form a helical membrane-spanning segment. Over 365-367 (GFY) the chain is Periplasmic. A helical transmembrane segment spans residues 368–387 (VTFYVIFALLILSLALSTTI). The Cytoplasmic portion of the chain corresponds to 388–402 (RQPEQKMLREAHGSL).

It belongs to the major facilitator superfamily. As to quaternary structure, interacts with BtsS and YpdA.

The protein resides in the cell inner membrane. Functionally, part of a nutrient-sensing regulatory network composed of the two-component regulatory systems BtsS/BtsR and YpdA/YpdB, and their respective target proteins, BtsT and YhjX. This is an uncharacterized protein from Escherichia coli (strain K12).